The primary structure comprises 421 residues: Serine hydroxymethyltransferase (421 aa).

Residues leucine 120 and 124–126 each bind (6S)-5,6,7,8-tetrahydrofolate; that span reads GHL. Residue lysine 229 is modified to N6-(pyridoxal phosphate)lysine. 354-356 contacts (6S)-5,6,7,8-tetrahydrofolate; that stretch reads SPF.

It belongs to the SHMT family. In terms of assembly, homodimer. The cofactor is pyridoxal 5'-phosphate.

Its subcellular location is the cytoplasm. It carries out the reaction (6R)-5,10-methylene-5,6,7,8-tetrahydrofolate + glycine + H2O = (6S)-5,6,7,8-tetrahydrofolate + L-serine. It participates in one-carbon metabolism; tetrahydrofolate interconversion. The protein operates within amino-acid biosynthesis; glycine biosynthesis; glycine from L-serine: step 1/1. In terms of biological role, catalyzes the reversible interconversion of serine and glycine with tetrahydrofolate (THF) serving as the one-carbon carrier. This reaction serves as the major source of one-carbon groups required for the biosynthesis of purines, thymidylate, methionine, and other important biomolecules. Also exhibits THF-independent aldolase activity toward beta-hydroxyamino acids, producing glycine and aldehydes, via a retro-aldol mechanism. This Opitutus terrae (strain DSM 11246 / JCM 15787 / PB90-1) protein is Serine hydroxymethyltransferase.